Here is a 297-residue protein sequence, read N- to C-terminus: MGEHEQVKPLETSSSKVKAKTIVMIPDSQKLLRCELESLKSQLQAQTKAFEFLNHSVTMLEKESCLQQIKIQQLEEVLSPTGRQGEKEEHKWGMEQGRQELYGALTQGLQGLEKTLRDSEEMQRARTTRCLQLLAQEIRDSKKFLWEELELVREEVTFIYQKLQAQEDEISENLVNIQKMQKTQVKCRKILTKMKQQGHETAACPETEEIPQGASGCWKDDLQKELSDIWSAVHVLQNSIDSLTLCSGACPKASSLRGHKGHQCLSPPLPSWDSDSDCDQDLSQPPFSKSGRSFPPA.

Residues 147 to 297 (EELELVREEV…SKSGRSFPPA (151 aa)) adopt a coiled-coil conformation. The segment at 256-297 (LRGHKGHQCLSPPLPSWDSDSDCDQDLSQPPFSKSGRSFPPA) is disordered.

As to quaternary structure, interacts with DYNLT2. Interacts with GGNBP1. Interacts with OSBP2.

Its function is as follows. Functions during spermatid development; may participate in the centrosome reduction procedure of spermatids and is required for the formation of the connecting piece/sperm head-tail coupling apparatus (HTCA) and the correct and tight attachment of the flagellum to the nuclear envelope. The protein is Coiled-coil domain-containing protein 159 (CCDC159) of Homo sapiens (Human).